Here is a 527-residue protein sequence, read N- to C-terminus: Thymidine kinase (527 aa).

The tract at residues 1 to 57 (MTGRGQPPKKNDTYDYPRKQPPKNGSYDNYDYPTSTKTRSTNKQRKDSNYPPRETIF) is disordered. Positions 9–18 (KKNDTYDYPR) are enriched in basic and acidic residues. Polar residues predominate over residues 32–41 (YPTSTKTRST). 216–223 (GSIGVGKT) is an ATP binding site. Residue glutamate 243 is the Proton acceptor of the active site. Substrate contacts are provided by tyrosine 260 and glutamine 281. Arginine 368 contacts ATP. Position 374 (arginine 374) interacts with substrate.

This sequence belongs to the herpesviridae thymidine kinase family. Homodimer.

It carries out the reaction thymidine + ATP = dTMP + ADP + H(+). Functionally, catalyzes the transfer of the gamma-phospho group of ATP to thymidine to generate dTMP in the salvage pathway of pyrimidine synthesis. The dTMP serves as a substrate for DNA polymerase during viral DNA replication. Allows the virus to be reactivated and to grow in non-proliferative cells lacking a high concentration of phosphorylated nucleic acid precursors. The chain is Thymidine kinase from Saimiriine herpesvirus 2 (strain 11) (SaHV-2).